Reading from the N-terminus, the 47-residue chain is Delta-actitoxin-Ael1b (47 aa).

3 disulfide bridges follow: Cys4-Cys44, Cys6-Cys34, and Cys27-Cys45.

Belongs to the sea anemone sodium channel inhibitory toxin family. Type I subfamily.

It localises to the secreted. Its subcellular location is the nematocyst. In terms of biological role, produces a positive inotropic effect in mammalian heart muscle. Modifies current passing through the fast sodium channel (Nav) in neuroblastoma cells, leading to delayed and incomplete inactivation. Paralyzes the shore crab (C.maenas) by tetanic contractions after intramuscular injection. This is Delta-actitoxin-Ael1b from Anthopleura elegantissima (Green aggregating anemone).